The following is a 213-amino-acid chain: Peroxynitrite isomerase 2 (213 aa).

A GXWXGXG motif is present at residues 58 to 64; the sequence is GVWRGEG. Heme b is bound by residues lysine 176 and histidine 203.

Belongs to the nitrobindin family. As to quaternary structure, homodimer. Heme b is required as a cofactor.

The enzyme catalyses peroxynitrite = nitrate. It functions in the pathway nitrogen metabolism. Heme-binding protein able to scavenge peroxynitrite and to protect free L-tyrosine against peroxynitrite-mediated nitration, by acting as a peroxynitrite isomerase that converts peroxynitrite to nitrate. Therefore, this protein likely plays a role in peroxynitrite sensing and in the detoxification of reactive nitrogen and oxygen species (RNS and ROS, respectively). Is able to bind nitric oxide (NO) in vitro, but may act as a sensor of peroxynitrite levels in vivo. This chain is Peroxynitrite isomerase 2, found in Rhodococcus jostii (strain RHA1).